We begin with the raw amino-acid sequence, 251 residues long: Retinoic acid early-inducible protein 1-epsilon (251 aa).

The first 28 residues, 1-28 (MAKAAVTKRHHFMIQKLLILLSYGYTNG), serve as a signal peptide directing secretion. An intrachain disulfide couples Cys-37 to Cys-56. Residues Asn-38, Asn-70, Asn-83, Asn-141, and Asn-154 are each glycosylated (N-linked (GlcNAc...) asparagine). Cys-88 and Cys-188 are disulfide-bonded. Residues 196 to 228 (LKQSKEKPRSTSRSPSITQLTSTSPLPPPSHST) form a disordered region. Low complexity predominate over residues 209–219 (SPSITQLTSTS). Residue Ser-225 is the site of GPI-anchor amidated serine attachment. Residues 226–251 (HSTSKKGFISVGLIFISLLFAFAFAM) constitute a propeptide, removed in mature form.

Belongs to the NKG2D ligand family. Glycosylated.

The protein resides in the cell membrane. Acts as a ligand for KLRK1. This chain is Retinoic acid early-inducible protein 1-epsilon (Raet1e), found in Mus musculus (Mouse).